The sequence spans 550 residues: MLAQLFEQLFQSIDSTLITNIFIWAVIFVFLSAWWCDKKNIHSKFREYAPTLMGALGILGTFIGIIIGLLNFNTESIDTSIPVLLGGLKTAFITSIVGMFFAILFNGMDAFFFANKRSALAENNPESVTPEHIYHELKEQNQTLTKLVSGINGDSEGSLIAQIKLLRTEISDSSQAQLANHTHFSNKLWEQLEQFADLMAKGATEQIIDALRQVIIDFNENLTEQFGENFKALDASVKKLVEWQGNYKTQIEQMSEQYQQSVESLVETKTAVAGIWEECKEIPLAMSELREVLQVNQHQISELSRHLETFVAIRDKATTVLPEIQNKMAEVGELLKSGAANVSASLEQTSQQILLNADSMRVALDEGTEGFRQSVTQTQQAFASMAHDVSNSSETLTSTLGETITEMKQSGEEFLKSLESHSKELHRNMEQNTTNVIDMFSKTGEKINHQLSSNADNMFDSIQTSFDKAGAGLTSQVRESIEKFALSINEQLHAFEQATEREMNREMQSLGNALLSISKGFVGNYEKLIKDYQIVMGQLQALISANKHRG.

The next 3 membrane-spanning stretches (helical) occupy residues 16 to 36, 52 to 72, and 92 to 112; these read TLIT…AWWC, LMGA…LLNF, and FITS…DAFF.

This sequence belongs to the MotA family.

It localises to the cell inner membrane. Its function is as follows. Component of antiviral defense system Zorya type II, composed of ZorA, ZorB and ZorE. Expression of Zorya type II in E.coli (strain MG1655) confers resistance to phages SECphi7 and T7. While most T7 infected Zorya-containing cells undergo abortive infection, a minority produce viable phage progeny. These eventually accumulate to a high multiplicity of infection, leading to culture collapse by 170 minutes after initial infection. ZorA and ZorB probably assemble in the cell inner membrane and exert their effect there. This Escherichia coli (strain ATCC 8739 / DSM 1576 / NBRC 3972 / NCIMB 8545 / WDCM 00012 / Crooks) protein is Zorya protein ZorA.